Here is a 921-residue protein sequence, read N- to C-terminus: Probable dipeptidyl-aminopeptidase B (921 aa).

Positions 1–87 (MDAPATASRQ…EADTNDLETG (87 aa)) are disordered. The Cytoplasmic segment spans residues 1–108 (MDAPATASRQ…RVGVDRGLKK (108 aa)). Over residues 22–33 (SSLSTVSTTSLV) the composition is skewed to low complexity. The span at 35–45 (DRLHEHNEKSY) shows a compositional bias: basic and acidic residues. The segment covering 66–75 (PDDDDDDDES) has biased composition (acidic residues). Residues 109–129 (VILILAAAFLFAWGAALFVFL) form a helical; Signal-anchor for type II membrane protein membrane-spanning segment. The Vacuolar segment spans residues 130–921 (SNKSYKHAST…KPIVEPKARV (792 aa)). Asn-131, Asn-364, and Asn-577 each carry an N-linked (GlcNAc...) asparagine glycan. The active-site Charge relay system is the Ser-768. Asn-827 carries an N-linked (GlcNAc...) asparagine glycan. Catalysis depends on charge relay system residues Asp-845 and His-878.

It belongs to the peptidase S9B family.

It is found in the vacuole membrane. It carries out the reaction Release of an N-terminal dipeptide, Xaa-Yaa-|-Zaa-, from a polypeptide, preferentially when Yaa is Pro, provided Zaa is neither Pro nor hydroxyproline.. In terms of biological role, type IV dipeptidyl-peptidase which removes N-terminal dipeptides sequentially from polypeptides having unsubstituted N-termini provided that the penultimate residue is proline. In Colletotrichum graminicola (strain M1.001 / M2 / FGSC 10212) (Maize anthracnose fungus), this protein is Probable dipeptidyl-aminopeptidase B (DAPB).